We begin with the raw amino-acid sequence, 391 residues long: Trehalose-phosphate phosphatase (391 aa).

Catalysis depends on Asp147, which acts as the Nucleophile. Positions 147, 149, and 330 each coordinate Mg(2+). 147–149 (DFD) serves as a coordination point for substrate.

This sequence belongs to the trehalose phosphatase family. Requires Mg(2+) as cofactor.

The enzyme catalyses alpha,alpha-trehalose 6-phosphate + H2O = alpha,alpha-trehalose + phosphate. It functions in the pathway glycan biosynthesis; trehalose biosynthesis. Functionally, removes the phosphate from trehalose 6-phosphate to produce free trehalose. This is Trehalose-phosphate phosphatase (otsB) from Mycobacterium bovis (strain ATCC BAA-935 / AF2122/97).